The following is a 76-amino-acid chain: Acyl carrier protein (76 aa).

A Carrier domain is found at 1-76 (MATFDEVKEV…AAVDYIGSKQ (76 aa)). Ser36 bears the O-(pantetheine 4'-phosphoryl)serine mark.

The protein belongs to the acyl carrier protein (ACP) family. In terms of processing, 4'-phosphopantetheine is transferred from CoA to a specific serine of apo-ACP by AcpS. This modification is essential for activity because fatty acids are bound in thioester linkage to the sulfhydryl of the prosthetic group.

The protein localises to the cytoplasm. The protein operates within lipid metabolism; fatty acid biosynthesis. Its function is as follows. Carrier of the growing fatty acid chain in fatty acid biosynthesis. The polypeptide is Acyl carrier protein (Deinococcus geothermalis (strain DSM 11300 / CIP 105573 / AG-3a)).